The sequence spans 130 residues: Mediator of RNA polymerase II transcription subunit 31 (130 aa).

The protein belongs to the Mediator complex subunit 31 family. Component of the Mediator complex.

It localises to the nucleus. Component of the Mediator complex, a coactivator involved in the regulated transcription of nearly all RNA polymerase II-dependent genes. Mediator functions as a bridge to convey information from gene-specific regulatory proteins to the basal RNA polymerase II transcription machinery. Mediator is recruited to promoters by direct interactions with regulatory proteins and serves as a scaffold for the assembly of a functional preinitiation complex with RNA polymerase II and the general transcription factors. The polypeptide is Mediator of RNA polymerase II transcription subunit 31 (SOH1) (Candida glabrata (strain ATCC 2001 / BCRC 20586 / JCM 3761 / NBRC 0622 / NRRL Y-65 / CBS 138) (Yeast)).